The chain runs to 203 residues: Large ribosomal subunit protein uL13 (203 aa).

Ala-2 carries the N-acetylalanine modification. Arg-59 carries the citrulline modification. Phosphoserine is present on Ser-77. Residue Arg-140 is modified to Citrulline. An N6-acetyllysine modification is found at Lys-191.

It belongs to the universal ribosomal protein uL13 family. As to quaternary structure, component of the 60S ribosome. Component of the GAIT complex. Interacts with EIF4G1. Phosphorylation at Ser-77 upon interferon-gamma treatment in monocytes involves a DAPK1-DAPK3 kinase cascade and is causing release from the ribosome, association with the GAIT complex and subsequent involvement in transcript-selective translation inhibition. In terms of processing, citrullinated by PADI4.

Its subcellular location is the cytoplasm. Functionally, associated with ribosomes but is not required for canonical ribosome function and has extra-ribosomal functions. Component of the GAIT (gamma interferon-activated inhibitor of translation) complex which mediates interferon-gamma-induced transcript-selective translation inhibition in inflammation processes. Upon interferon-gamma activation and subsequent phosphorylation dissociates from the ribosome and assembles into the GAIT complex which binds to stem loop-containing GAIT elements in the 3'-UTR of diverse inflammatory mRNAs (such as ceruplasmin) and suppresses their translation. In the GAIT complex interacts with m7G cap-bound eIF4G at or near the eIF3-binding site and blocks the recruitment of the 43S ribosomal complex. Involved in methylation of rRNA. The sequence is that of Large ribosomal subunit protein uL13 (RPL13A) from Oryctolagus cuniculus (Rabbit).